A 681-amino-acid polypeptide reads, in one-letter code: Envelope glycoprotein (681 aa).

A signal peptide spans 1–18; it reads MKTTCLFISLILIQGIKT. Residues 19-648 lie on the Extracellular side of the membrane; it reads LPILEIASNN…GLGGKWWTSD (630 aa). The receptor-binding stretch occupies residues 38–188; that stretch reads SGTLQKTEDV…FSRQGQGYRH (151 aa). 8 N-linked (GlcNAc...) asparagine; by host glycosylation sites follow: asparagine 94, asparagine 171, asparagine 190, asparagine 202, asparagine 207, asparagine 219, asparagine 223, and asparagine 255. Positions 223 to 351 are disordered; it reads NQTCAPSKIP…STNNTSKNNF (129 aa). The segment covering 244-259 has biased composition (low complexity); the sequence is PTSTPTDATTLNTTDP. The mucin-like region stretch occupies residues 277 to 455; that stretch reads EPYTTSDAVT…PFLDGLINAP (179 aa). Polar residues-rich tracts occupy residues 278 to 290 and 308 to 341; these read PYTT…KQGL and EGNN…TTAI. Residues asparagine 310, asparagine 323, asparagine 326, asparagine 337, asparagine 344, asparagine 345, asparagine 350, asparagine 360, asparagine 389, asparagine 397, asparagine 408, and asparagine 487 are each glycosylated (N-linked (GlcNAc...) asparagine; by host). A compositionally biased stretch (low complexity) spans 342-351; that stretch reads STNNTSKNNF. Residues 366–414 are compositionally biased toward polar residues; sequence TQSTATENEQTSAPSKTTLPPTGNLTTAKSTNNTKGPTTTAPNMTNGHL. Residues 366-425 form a disordered region; that stretch reads TQSTATENEQTSAPSKTTLPPTGNLTTAKSTNNTKGPTTTAPNMTNGHLTSPSPTPNPTT. The interval 529–549 is fusion peptide; it reads GLSWIPFFGPGIEGLYTAGLI. 2 N-linked (GlcNAc...) asparagine; by host glycosylation sites follow: asparagine 564 and asparagine 619. Residues 649–669 traverse the membrane as a helical segment; that stretch reads WGVLTNLGILLLLSIAVLIAL. At 670-681 the chain is on the cytoplasmic side; it reads SCICRIFTKYIG. Residues cysteine 671 and cysteine 673 are each lipidated (S-palmitoyl cysteine; by host).

The protein belongs to the filoviruses glycoprotein family. Homotrimer; each monomer consists of a GP1 and a GP2 subunit linked by disulfide bonds. The resulting peplomers (GP1,2) protrude from the virus surface as spikes. GP1,2 interacts with human CD209 and CLEC4M (collectively referred to as DC-SIGN(R)). Asialoglycoprotein receptor (ASGP-R) may be a liver-specific receptor for GP1,2. Members of the Tyro3 receptor tyrosine kinase family may be cell entry factors interacting with GP1,2. Post-translationally, N-glycosylated. In terms of processing, O-glycosylated in the mucin-like region. Specific enzymatic cleavages in vivo yield mature proteins. The precursor is processed into GP1 and GP2 by host cell furin in the trans Golgi, and maybe by other host proteases, to yield the mature GP1 and GP2 proteins. The cleavage site corresponds to the furin optimal cleavage sequence [KR]-X-[KR]-R. Post-translationally, GP1 is phosphorylated on serine residues between residues 260 and 273.

It is found in the virion membrane. Its subcellular location is the host cell membrane. Functionally, GP1 is responsible for binding to the receptor(s) on target cells. Interacts with CD209/DC-SIGN and CLEC4M/DC-SIGNR which act as cofactors for virus entry into the host cell. Binding to CD209 and CLEC4M, which are respectively found on dendritic cells (DCs), and on endothelial cells of liver sinusoids and lymph node sinuses, facilitate infection of macrophages and endothelial cells. These interactions not only facilitate virus cell entry, but also allow capture of viral particles by DCs and subsequent transmission to susceptible cells without DCs infection (trans infection). Its function is as follows. GP2 acts as a class I viral fusion protein. Under the current model, the protein has at least 3 conformational states: pre-fusion native state, pre-hairpin intermediate state, and post-fusion hairpin state. During viral and target cell membrane fusion, the coiled coil regions (heptad repeats) assume a trimer-of-hairpins structure, positioning the fusion peptide in close proximity to the C-terminal region of the ectodomain. The formation of this structure appears to drive apposition and subsequent fusion of viral and target cell membranes. Responsible for penetration of the virus into the cell cytoplasm by mediating the fusion of the membrane of the endocytosed virus particle with the endosomal membrane. Low pH in endosomes induces an irreversible conformational change in GP2, releasing the fusion hydrophobic peptide. The polypeptide is Envelope glycoprotein (GP) (Lake Victoria marburgvirus (strain Popp-67) (MARV)).